The chain runs to 264 residues: Major prion protein (264 aa).

The signal sequence occupies residues 1–24 (MVKSHIGSWILVLFVAMWSDVGLC). An interaction with GRB2, ERI3 and SYN1 region spans residues 25–241 (KKRPKPGGGW…ESQAYYQRGA (217 aa)). The segment at 28 to 119 (PKPGGGWNTG…WNKPSKPKTN (92 aa)) is disordered. 6 consecutive repeat copies span residues 54-62 (PQGGGGWGQ), 63-70 (PHGGGWGQ), 71-78 (PHGGGWGQ), 79-86 (PHGGGWGQ), 87-94 (PHGGGWGQ), and 95-103 (PHGGGGWGQ). Residues 54–103 (PQGGGGWGQPHGGGWGQPHGGGWGQPHGGGWGQPHGGGWGQPHGGGGWGQ) are 6 X 8 AA tandem repeats of P-H-G-G-G-W-G-Q. Gly residues predominate over residues 55–105 (QGGGGWGQPHGGGWGQPHGGGWGQPHGGGWGQPHGGGWGQPHGGGGWGQGG). Residues His72, Gly73, Gly74, His80, Gly81, Gly82, His88, Gly89, Gly90, His96, Gly98, and Gly99 each contribute to the Cu(2+) site. Cys190 and Cys225 form a disulfide bridge. Residues Asn192 and Asn208 are each glycosylated (N-linked (GlcNAc...) asparagine). A lipid anchor (GPI-anchor amidated alanine) is attached at Ala241. The propeptide at 242-264 (SVILFSSPPVILLISFLIFLIVG) is removed in mature form.

Belongs to the prion family. As to quaternary structure, monomer and homodimer. Has a tendency to aggregate into amyloid fibrils containing a cross-beta spine, formed by a steric zipper of superposed beta-strands. Soluble oligomers may represent an intermediate stage on the path to fibril formation. Copper binding may promote oligomerization. Interacts with GRB2, APP, ERI3/PRNPIP and SYN1. Mislocalized cytosolically exposed PrP interacts with MGRN1; this interaction alters MGRN1 subcellular location and causes lysosomal enlargement. Interacts with KIAA1191.

Its subcellular location is the cell membrane. It localises to the golgi apparatus. Its function is as follows. Its primary physiological function is unclear. Has cytoprotective activity against internal or environmental stresses. May play a role in neuronal development and synaptic plasticity. May be required for neuronal myelin sheath maintenance. May play a role in iron uptake and iron homeostasis. Soluble oligomers are toxic to cultured neuroblastoma cells and induce apoptosis (in vitro). Association with GPC1 (via its heparan sulfate chains) targets PRNP to lipid rafts. Also provides Cu(2+) or Zn(2+) for the ascorbate-mediated GPC1 deaminase degradation of its heparan sulfate side chains. The protein is Major prion protein (PRNP) of Antilope cervicapra (Blackbuck).